We begin with the raw amino-acid sequence, 148 residues long: Iron/alpha-ketoglutarate-dependent dioxygenase ausU (148 aa).

Fe cation contacts are provided by His45 and Asp47.

The protein belongs to the PhyH family. Homodimer. The cofactor is Fe cation.

It functions in the pathway secondary metabolite biosynthesis; terpenoid biosynthesis. In terms of biological role, iron/alpha-ketoglutarate-dependent dioxygenase; part of the gene cluster B that mediates the biosynthesis of austinol and dehydroaustinol, two fungal meroterpenoids. The first step of the pathway is the synthesis of 3,5-dimethylorsellinic acid by the polyketide synthase ausA. 3,5-dimethylorsellinic acid is then prenylated by the polyprenyl transferase ausN. Further epoxidation by the FAD-dependent monooxygenase ausM and cyclization by the probable terpene cyclase ausL lead to the formation of protoaustinoid A. Protoaustinoid A is then oxidized to spiro-lactone preaustinoid A3 by the combined action of the FAD-binding monooxygenases ausB and ausC, and the dioxygenase ausE. Acid-catalyzed keto-rearrangement and ring contraction of the tetraketide portion of preaustinoid A3 by ausJ lead to the formation of preaustinoid A4. The aldo-keto reductase ausK, with the help of ausH, is involved in the next step by transforming preaustinoid A4 into isoaustinone which is in turn hydroxylated by the P450 monooxygenase ausI to form austinolide. Finally, the cytochrome P450 monooxygenase ausG modifies austinolide to austinol. Austinol can be further modified to dehydroaustinol which forms a diffusible complex with diorcinol that initiates conidiation. Due to genetic rearrangements of the clusters and the subsequent loss of some enzymes, the end products of the Emericella nidulans austinoid biosynthesis clusters are austinol and dehydroaustinol, even if additional enzymes, such as the O-acetyltransferase ausQ and the cytochrome P450 monooxygenase ausR are still functional. The sequence is that of Iron/alpha-ketoglutarate-dependent dioxygenase ausU from Emericella nidulans (strain FGSC A4 / ATCC 38163 / CBS 112.46 / NRRL 194 / M139) (Aspergillus nidulans).